Consider the following 572-residue polypeptide: MHLENRVLSSVLDYASKFYKRMSSLVFFSANSIQVQMNISQSSWIKCRDWMAFALSHHIIMGIYLLILRNFLPQVVPDFEWQHYFMRVFIVHIIYIIISYFIRITRYPPGPPPMAVFGNSPFVNILTPEQTFLEYREIYGPIFTLHLSQPTIILAEYKTIQEALVKNGQQTSGRSSAESFVLFTGDRLNGDGVILAMRQKWKDMRHEISRFMNKWYGAPMDELVLHHTRCLEQELAKIAETKSLIDLRDPLAGAIANVIQQITIGRNYMYQDQEFQTQLRDINAVVKEIMTAEVFFVNCYPWLRYLPEGILRKWTNYKRSGFRLQQWFRTILEEHHVNRHQGDFMSHMIDLQESKQEQFRDLSIILTCGDMWTGGMETTVTTLRWGIIYLLNNPEVQAKCQMEILDVFGNDIPDMGKMNQTPYVRATLSEIQRLANVLPWAIPHKTIEECNIGGYDIPVNTEIIPALGAVLFDPNVFESPKQFKPERFLDEEGKYRVMEEFRPFGLGPRVCLGERIARTELYLIFASLLQNFRFYLNRGDPIPVAERVIGGITAPPKPYATRVEYLGNRLIN.

Helical transmembrane passes span 52–72 and 84–104; these read AFAL…RNFL and YFMR…FIRI.

It belongs to the cytochrome P450 family. As to expression, expressed in the 2 embryonic head hypodermal cells XXXL/R.

It localises to the membrane. The enzyme catalyses 5alpha-cholest-7-en-3-one + 3 reduced [NADPH--hemoprotein reductase] + 3 O2 = (25S)-Delta7-dafachronate + 3 oxidized [NADPH--hemoprotein reductase] + 4 H2O + 4 H(+). The catalysed reaction is cholest-4-en-3-one + 3 reduced [NADPH--hemoprotein reductase] + 3 O2 = (25S)-3-oxocholest-4-en-26-oate + 3 oxidized [NADPH--hemoprotein reductase] + 4 H2O + 4 H(+). It participates in steroid hormone biosynthesis; dafachronic acid biosynthesis. Its function is as follows. Converts the 3-keto steroids 4-cholesten-3-one and lathosterone into the carboxylic metabolites 3-keto-4-cholestenate (Delta(4)-dafachronic acid, Delta(4)-DA) and 3-keto-7,(5a)-cholestenate (Delta(7)-dafachronic acid, Delta(7)-DA) respectively, by catalyzing successive oxidations at C-26. Dafachronic acids bind directly to the nuclear hormone receptor (NHR) DAF-12, suppressing dauer formation and inducing reproductive growth. In a non-cell autonomous manner, negatively regulates body wall muscle arm extensions to motor neurons probably by preventing daf-12 isoform b activation. May be involved in thermotolerance. The polypeptide is 3-ketosteroid oxygenase (daf-9) (Caenorhabditis elegans).